We begin with the raw amino-acid sequence, 116 residues long: Large ribosomal subunit protein uL18 (116 aa).

It belongs to the universal ribosomal protein uL18 family. Part of the 50S ribosomal subunit; part of the 5S rRNA/L5/L18/L25 subcomplex. Contacts the 5S and 23S rRNAs.

Functionally, this is one of the proteins that bind and probably mediate the attachment of the 5S RNA into the large ribosomal subunit, where it forms part of the central protuberance. This Shewanella sediminis (strain HAW-EB3) protein is Large ribosomal subunit protein uL18.